We begin with the raw amino-acid sequence, 76 residues long: Conotoxin PnMKLT1-1111 (76 aa).

Positions 1–22 (MKLTCMMIVAVLFLTAWTVVTA) are cleaved as a signal peptide. Positions 23–50 (VPHSNKRLANLYLKARHEMKNPEASNVD) are excised as a propeptide. Disulfide bonds link Cys53–Cys67, Cys60–Cys71, and Cys66–Cys75.

This sequence belongs to the conotoxin O1 superfamily. Expressed by the venom duct.

The protein resides in the secreted. In Conus pennaceus (Feathered cone), this protein is Conotoxin PnMKLT1-1111.